Here is a 350-residue protein sequence, read N- to C-terminus: Twinfilin-1 (350 aa).

The residue at position 2 (Ser-2) is an N-acetylserine. One can recognise an ADF-H 1 domain in the interval 2 to 139; the sequence is SHRTGIQASE…SLHGYKKYLL (138 aa). A phosphoserine mark is found at Ser-143 and Ser-277. The ADF-H 2 domain occupies 175–313; the sequence is LQGVAFPISR…TADFLYEEVH (139 aa). Position 309 is a phosphotyrosine (Tyr-309). The interval 316 to 350 is disordered; that stretch reads QHAHKQSFAKPKGPAGKRGIRRLIRGPAETEATTD. Phosphothreonine is present on Thr-349.

Belongs to the actin-binding proteins ADF family. Twinfilin subfamily. Interacts with G-actin; ADP-actin form and capping protein (CP). May also be able to interact with TWF2 and phosphoinositides, PI(4,5)P2. When bound to PI(4,5)P2, it is down-regulated. Interacts with ACTG1. Post-translationally, phosphorylated on serine and threonine residues.

It localises to the cytoplasm. The protein localises to the cytoskeleton. In terms of biological role, actin-binding protein involved in motile and morphological processes. Inhibits actin polymerization, likely by sequestering G-actin. By capping the barbed ends of filaments, it also regulates motility. Seems to play an important role in clathrin-mediated endocytosis and distribution of endocytic organelles. The sequence is that of Twinfilin-1 (TWF1) from Pongo abelii (Sumatran orangutan).